The chain runs to 173 residues: 2-C-methyl-D-erythritol 2,4-cyclodiphosphate synthase (173 aa).

A divalent metal cation is bound by residues Asp-17 and His-19. 4-CDP-2-C-methyl-D-erythritol 2-phosphate is bound by residues 17-19 (DVH) and 49-50 (HS). Residue His-57 coordinates a divalent metal cation. 4-CDP-2-C-methyl-D-erythritol 2-phosphate contacts are provided by residues 76–80 (FPNTD), 147–150 (TTTE), and Arg-157.

It belongs to the IspF family. As to quaternary structure, homotrimer. The cofactor is a divalent metal cation.

The catalysed reaction is 4-CDP-2-C-methyl-D-erythritol 2-phosphate = 2-C-methyl-D-erythritol 2,4-cyclic diphosphate + CMP. It participates in isoprenoid biosynthesis; isopentenyl diphosphate biosynthesis via DXP pathway; isopentenyl diphosphate from 1-deoxy-D-xylulose 5-phosphate: step 4/6. Its function is as follows. Involved in the biosynthesis of isopentenyl diphosphate (IPP) and dimethylallyl diphosphate (DMAPP), two major building blocks of isoprenoid compounds. Catalyzes the conversion of 4-diphosphocytidyl-2-C-methyl-D-erythritol 2-phosphate (CDP-ME2P) to 2-C-methyl-D-erythritol 2,4-cyclodiphosphate (ME-CPP) with a corresponding release of cytidine 5-monophosphate (CMP). This chain is 2-C-methyl-D-erythritol 2,4-cyclodiphosphate synthase, found in Ehrlichia ruminantium (strain Welgevonden).